We begin with the raw amino-acid sequence, 1893 residues long: Nestin (1893 aa).

An N-acetylmethionine modification is found at Met1. Residues 1–7 (MEGCVGE) are head. The interval 8 to 43 (ESFQMWELNRRLEAYLTRVKTLEEQNQLLSAELGGL) is coil 1A. The 307-residue stretch at 8–314 (ESFQMWELNR…TLLEAENSRL (307 aa)) folds into the IF rod domain. Residues 44–55 (RAQSGDTSWRAR) are linker 1. Positions 56 to 151 (ADDELASLRI…AAHEEERAHL (96 aa)) are coil 1B. The tract at residues 150 to 172 (HLNAQAACAPRRPPAPPHGSPVR) is disordered. The linker 12 stretch occupies residues 152–174 (NAQAACAPRRPPAPPHGSPVRAP). Residues 175–193 (EVEDLARRLGEVWRGAVRD) are coil 2A. Residues 194-196 (YQE) form a linker 2 region. Positions 197 to 314 (RVAHMESSLG…TLLEAENSRL (118 aa)) are coil 2B. Ser312 is modified (phosphoserine). Residues 315–1893 (QTPGRGSQAS…DGDSWSSGED (1579 aa)) form a tail region. Thr316 is subject to Phosphothreonine. Residues Ser356 and Ser359 each carry the phosphoserine modification. Residue Thr389 is modified to Phosphothreonine. Disordered regions lie at residues 437–479 (PELE…SGSR), 507–529 (NSSA…SQGP), and 556–879 (KENC…NQKS). The segment covering 507–517 (NSSAQKTQESG) has biased composition (polar residues). At Ser562 the chain carries Phosphoserine. Basic and acidic residues-rich tracts occupy residues 572-595 (GPEK…EKTL) and 606-615 (LGKEDTRTED). Ser620 is modified (phosphoserine). Composition is skewed to basic and acidic residues over residues 634-646 (ESQE…KEGN) and 670-681 (MLERLVEKEDQS). Residues Ser685 and Ser729 each carry the phosphoserine modification. 4 stretches are compositionally biased toward basic and acidic residues: residues 717 to 730 (RLIE…LRSP), 761 to 774 (RLIE…LRSA), 802 to 818 (ILER…LRSP), and 846 to 879 (MLER…NQKS). Ser817 bears the Phosphoserine mark. Residue Ser903 is modified to Phosphoserine. Composition is skewed to basic and acidic residues over residues 949–966 (LLED…DRNG) and 989–1051 (QRIV…KSLE). A disordered region spans residues 949 to 1130 (LLEDKTHKSL…ARSLGKENQE (182 aa)). A phosphoserine mark is found at Ser1005 and Ser1049. Lys1136 is covalently cross-linked (Glycyl lysine isopeptide (Lys-Gly) (interchain with G-Cter in SUMO1); alternate). Residue Lys1136 forms a Glycyl lysine isopeptide (Lys-Gly) (interchain with G-Cter in SUMO2); alternate linkage. Residues Ser1145 and Ser1166 each carry the phosphoserine modification. Positions 1155–1222 (ETAEEDLERR…ELSSLGKWNV (68 aa)) are disordered. Residues 1198 to 1212 (DENRETLTSLEKESQ) are compositionally biased toward basic and acidic residues. A phosphoserine mark is found at Ser1216 and Ser1229. A disordered region spans residues 1237-1263 (EGLQEEQHQESLREVKQELPSSGNQQR). The segment covering 1241–1253 (EEQHQESLREVKQ) has biased composition (basic and acidic residues). Ser1322 carries the phosphoserine modification. 2 disordered regions span residues 1336-1369 (DNLE…EQDS) and 1388-1824 (EVVG…SEQV). 2 stretches are compositionally biased toward basic and acidic residues: residues 1354 to 1363 (VTERDEDRAQ) and 1393 to 1403 (EDPRHFAREEA). 2 stretches are compositionally biased toward acidic residues: residues 1458–1469 (ESMEGWEEEEAS) and 1561–1576 (QDWE…DDLG). Phosphoserine is present on residues Ser1570, Ser1594, Ser1686, Ser1695, Ser1772, and Ser1774. Over residues 1688–1709 (GFADEEESGEEGEEEDADEEGA) the composition is skewed to acidic residues. The segment covering 1773–1788 (GSEESESASLEGEEGQ) has biased composition (acidic residues). The segment covering 1815–1824 (QSPNLDSEQV) has biased composition (polar residues). Phosphoserine is present on residues Ser1866, Ser1889, and Ser1890. The tract at residues 1870-1893 (LGPSQPLKFTLSGVDGDSWSSGED) is disordered.

Belongs to the intermediate filament family. In terms of assembly, forms homodimers and homotetramers in vitro. In mixtures with other intermediate filament proteins such as vimentin and alpha-internexin, this protein preferentially forms heterodimers which can assemble to form intermediate filaments if nestin does not exceed 25%. Interacts with FHOD3. In terms of processing, constitutively phosphorylated. This increases during mitosis when the cytoplasmic intermediate filament network is reorganized. As to expression, CNS stem cells.

Its function is as follows. Required for brain and eye development. Promotes the disassembly of phosphorylated vimentin intermediate filaments (IF) during mitosis and may play a role in the trafficking and distribution of IF proteins and other cellular factors to daughter cells during progenitor cell division. Required for survival, renewal and mitogen-stimulated proliferation of neural progenitor cells. This Rattus norvegicus (Rat) protein is Nestin (Nes).